The primary structure comprises 109 residues: Ribonuclease P protein component 2 (109 aa).

The protein belongs to the eukaryotic/archaeal RNase P protein component 2 family. In terms of assembly, consists of a catalytic RNA component and at least 4-5 protein subunits.

The protein resides in the cytoplasm. It carries out the reaction Endonucleolytic cleavage of RNA, removing 5'-extranucleotides from tRNA precursor.. Part of ribonuclease P, a protein complex that generates mature tRNA molecules by cleaving their 5'-ends. The polypeptide is Ribonuclease P protein component 2 (Archaeoglobus fulgidus (strain ATCC 49558 / DSM 4304 / JCM 9628 / NBRC 100126 / VC-16)).